Here is a 191-residue protein sequence, read N- to C-terminus: Programmed cell death protein 6 (191 aa).

Position 2 is an N-acetylalanine (A2). EF-hand domains lie at 23–58 (PDQS…GTWT), 59–89 (PFNP…TGVW), 90–125 (KYIT…FGYR), 126–161 (LSDQ…LQRL), and 162–191 (TDIF…FSIV). Residues D36, D38, S40, V42, and E47 each coordinate Ca(2+). The Ca(2+) site is built by D103, D105, S107, M109, and E114. Positions 169, 171, 173, and 175 each coordinate Mg(2+).

In terms of assembly, homodimer and heterodimer; heterodimerizes (via the EF-hand 5) with PEF1. Isoform 1 and isoform 2 self-associate; probably forming homodimers. Interacts with CPNE4 (via VWFA domain). Interacts with PDCD6IP; the interaction is calcium-dependent. Interacts with RBM22. Interacts with PLSCR4. Interacts with ANXA7 and TSG101. Interacts with DAPK1. Interacts with SEC31A; the interaction is calcium-dependent and promotes monoubiquitination of SEC31A. Interacts with ANXA11 (via N-terminus); the interaction is calcium-dependent. Interacts with PLSCR3 (via N-terminus); the interaction is calcium-dependent. Interacts with MCOLN1; the interaction is calcium-dependent. Interacts with KDR; the interaction is calcium-dependent. Interacts with HEBP2; the interaction is calcium-dependent. Interacts with TFG. Isoform 1: Interacts with SHISA5, leading to stabilize it. Isoform 2: Does not interact with SHISA5. Isoform 2: Does not interact with PDCD6IP, TSG101, ANXA7 and ANXA11.

The protein localises to the endoplasmic reticulum membrane. The protein resides in the cytoplasmic vesicle. Its subcellular location is the COPII-coated vesicle membrane. It localises to the cytoplasm. It is found in the nucleus. The protein localises to the endosome. Functionally, calcium sensor that plays a key role in processes such as endoplasmic reticulum (ER)-Golgi vesicular transport, endosomal biogenesis or membrane repair. Acts as an adapter that bridges unrelated proteins or stabilizes weak protein-protein complexes in response to calcium: calcium-binding triggers exposure of apolar surface, promoting interaction with different sets of proteins thanks to 3 different hydrophobic pockets, leading to translocation to membranes. Involved in ER-Golgi transport by promoting the association between PDCD6IP and TSG101, thereby bridging together the ESCRT-III and ESCRT-I complexes. Together with PEF1, acts as a calcium-dependent adapter for the BCR(KLHL12) complex, a complex involved in ER-Golgi transport by regulating the size of COPII coats. In response to cytosolic calcium increase, the heterodimer formed with PEF1 interacts with, and bridges together the BCR(KLHL12) complex and SEC31 (SEC31A or SEC31B), promoting monoubiquitination of SEC31 and subsequent collagen export, which is required for neural crest specification. Involved in the regulation of the distribution and function of MCOLN1 in the endosomal pathway. Promotes localization and polymerization of TFG at endoplasmic reticulum exit site. Required for T-cell receptor-, Fas-, and glucocorticoid-induced apoptosis. May mediate Ca(2+)-regulated signals along the death pathway: interaction with DAPK1 can accelerate apoptotic cell death by increasing caspase-3 activity. Its role in apoptosis may however be indirect, as suggested by knockout experiments. May inhibit KDR/VEGFR2-dependent angiogenesis; the function involves inhibition of VEGF-induced phosphorylation of the Akt signaling pathway. In case of infection by HIV-1 virus, indirectly inhibits HIV-1 production by affecting viral Gag expression and distribution. Has a lower Ca(2+) affinity than isoform 1. This chain is Programmed cell death protein 6 (PDCD6), found in Homo sapiens (Human).